The chain runs to 305 residues: UDP-3-O-acyl-N-acetylglucosamine deacetylase (305 aa).

The Zn(2+) site is built by His-79, His-238, and Asp-242. The Proton donor role is filled by His-265.

It belongs to the LpxC family. Requires Zn(2+) as cofactor.

It catalyses the reaction a UDP-3-O-[(3R)-3-hydroxyacyl]-N-acetyl-alpha-D-glucosamine + H2O = a UDP-3-O-[(3R)-3-hydroxyacyl]-alpha-D-glucosamine + acetate. It participates in glycolipid biosynthesis; lipid IV(A) biosynthesis; lipid IV(A) from (3R)-3-hydroxytetradecanoyl-[acyl-carrier-protein] and UDP-N-acetyl-alpha-D-glucosamine: step 2/6. In terms of biological role, catalyzes the hydrolysis of UDP-3-O-myristoyl-N-acetylglucosamine to form UDP-3-O-myristoylglucosamine and acetate, the committed step in lipid A biosynthesis. In Escherichia coli O45:K1 (strain S88 / ExPEC), this protein is UDP-3-O-acyl-N-acetylglucosamine deacetylase.